A 390-amino-acid chain; its full sequence is tRNA-specific 2-thiouridylase MnmA (390 aa).

ATP is bound by residues 36-43 (GMSGGVDS) and methionine 62. Residues 122–124 (NPD) form an interaction with target base in tRNA region. Cysteine 127 functions as the Nucleophile in the catalytic mechanism. Cysteines 127 and 223 form a disulfide. ATP is bound at residue glycine 151. The tract at residues 173–175 (KDQ) is interaction with tRNA. The Cysteine persulfide intermediate role is filled by cysteine 223. Residues 335 to 336 (RY) form an interaction with tRNA region.

It belongs to the MnmA/TRMU family.

It localises to the cytoplasm. It catalyses the reaction S-sulfanyl-L-cysteinyl-[protein] + uridine(34) in tRNA + AH2 + ATP = 2-thiouridine(34) in tRNA + L-cysteinyl-[protein] + A + AMP + diphosphate + H(+). In terms of biological role, catalyzes the 2-thiolation of uridine at the wobble position (U34) of tRNA, leading to the formation of s(2)U34. In Marinomonas sp. (strain MWYL1), this protein is tRNA-specific 2-thiouridylase MnmA.